The chain runs to 224 residues: BOS complex subunit TMEM147 (224 aa).

The chain crosses the membrane as a helical span at residues 1-21 (MTLFHFGNCFALAYFPYFITY). Residues 22–34 (KCSGLSEYNAFWK) are Cytoplasmic-facing. Residues 35–58 (CVQAGVTYLFVQLCKMLFLATFFP) traverse the membrane as a helical segment. At 59-66 (TWEGGIYD) the chain is on the lumenal side. A helical transmembrane segment spans residues 67 to 88 (FIGEFMKASVDVADLIGLNLVM). Residues 89–98 (SRNAGKGEYK) are Cytoplasmic-facing. A helical membrane pass occupies residues 99–124 (IMVAALGWATAELIMSRCIPLWVGAR). Over 125-129 (GIEFD) the chain is Lumenal. The chain crosses the membrane as a helical span at residues 130-155 (WKYIQMSIDSNISLVHYIVASAQVWM). Over 156-164 (ITRYDLYHT) the chain is Cytoplasmic. A helical transmembrane segment spans residues 165-187 (FRPAVLLLMFLSVYKAFVMETFV). Residues 188–194 (HLCSLGS) are Lumenal-facing. Residues 195–216 (WTALLARAVVTGLLALSTLALY) form a helical membrane-spanning segment. The Cytoplasmic portion of the chain corresponds to 217–224 (VAVVNVHS).

The protein belongs to the TMEM147 family. Component of the back of Sec61 (BOS) complex, composed of NCLN/Nicalin, NOMO1 and TMEM147. The BOS complex is part of the multi-pass translocon (MPT) complex, composed of three subcomplexes, the GEL complex (composed of RAB5IF/OPTI and TMCO1), the BOS complex (composed of NCLN/Nicalin, NOMO1 and TMEM147) and the PAT complex (composed of WDR83OS/Asterix and CCDC47). The MPT complex associates with the SEC61 complex. Interacts with CHRM3, CHRM1 and AVPR2. Interacts with LBR; promoting LBR localization to the nucleus inner membrane. Interacts with DHCR7.

The protein resides in the endoplasmic reticulum membrane. It localises to the nucleus membrane. The protein localises to the cell membrane. Its function is as follows. Component of the multi-pass translocon (MPT) complex that mediates insertion of multi-pass membrane proteins into the lipid bilayer of membranes. The MPT complex takes over after the SEC61 complex: following membrane insertion of the first few transmembrane segments of proteins by the SEC61 complex, the MPT complex occludes the lateral gate of the SEC61 complex to promote insertion of subsequent transmembrane regions. Also acts as a negative regulator of CHRM3 function, most likely by interfering with its trafficking to the cell membrane. Negatively regulates CHRM3-mediated calcium mobilization and activation of RPS6KA1/p90RSK activity. Regulates LBR localization to the nucleus inner membrane. The chain is BOS complex subunit TMEM147 from Canis lupus familiaris (Dog).